The primary structure comprises 451 residues: Cobyrinate a,c-diamide synthase (451 aa).

One can recognise a GATase cobBQ-type domain in the interval 246–437 (KIGVAYDEVF…VHTHVAAMPN (192 aa)). The active-site Nucleophile is Cys-328.

It belongs to the CobB/CbiA family. It depends on Mg(2+) as a cofactor.

The catalysed reaction is cob(II)yrinate + 2 L-glutamine + 2 ATP + 2 H2O = cob(II)yrinate a,c diamide + 2 L-glutamate + 2 ADP + 2 phosphate + 2 H(+). It catalyses the reaction Ni-sirohydrochlorin + 2 L-glutamine + 2 ATP + 2 H2O = Ni-sirohydrochlorin a,c-diamide + 2 L-glutamate + 2 ADP + 2 phosphate + 2 H(+). It functions in the pathway cofactor biosynthesis; adenosylcobalamin biosynthesis; cob(II)yrinate a,c-diamide from sirohydrochlorin (anaerobic route): step 10/10. Functionally, catalyzes the ATP-dependent amidation of the two carboxylate groups at positions a and c of cobyrinate, using either L-glutamine or ammonia as the nitrogen source. Involved in the biosynthesis of the unique nickel-containing tetrapyrrole coenzyme F430, the prosthetic group of methyl-coenzyme M reductase (MCR), which plays a key role in methanogenesis and anaerobic methane oxidation. Catalyzes the ATP-dependent amidation of the two carboxylate groups at positions a and c of Ni-sirohydrochlorin, using L-glutamine or ammonia as the nitrogen source. This chain is Cobyrinate a,c-diamide synthase, found in Methanobrevibacter smithii (strain ATCC 35061 / DSM 861 / OCM 144 / PS).